The following is a 437-amino-acid chain: F-box only protein 9 (437 aa).

A disordered region spans residues 1 to 26 (MSAEAEEDCHSDADRVGDEGNESPAE). Serine 2 carries the N-acetylalanine modification. Over residues 8–26 (DCHSDADRVGDEGNESPAE) the composition is skewed to basic and acidic residues. Histidine 10 carries the phosphoserine modification. The TPR repeat unit spans residues 84-117 (ARELFLQAVEEEQNGALYEAIKFYRRAMQLVPDI). Serine 126 bears the Phosphoserine mark. The F-box domain maps to 175-226 (QTHISVLPMEVLMYIFRWVVSSDLDLRSLEQLSLVCRGFYICARDPEIWRLA).

As to quaternary structure, part of the SCF (SKP1-CUL1-F-box) E3 ubiquitin-protein ligase complex SCF(FBXO9) composed of CUL1, SKP1, RBX1 and FBXO9. Interacts with TTI1 and TELO2; when TTI1 and TELO2 are phosphorylated by CK2.

It is found in the cytoplasm. It functions in the pathway protein modification; protein ubiquitination. Its function is as follows. Substrate recognition component of a SCF (SKP1-CUL1-F-box protein) E3 ubiquitin-protein ligase complex which mediates the ubiquitination and subsequent proteasomal degradation of target proteins and plays a role in several biological processes such as cell cycle, cell proliferation, or maintenance of chromosome stability. Ubiquitinates mTORC1-bound TTI1 and TELO2 when they are phosphorylated by CK2 following growth factor deprivation, leading to their degradation. In contrast, does not mediate ubiquitination of TTI1 and TELO2 when they are part of the mTORC2 complex. As a consequence, mTORC1 is inactivated to restrain cell growth and protein translation, while mTORC2 is the activated due to the relief of feedback inhibition by mTORC1. Plays a role in maintaining epithelial cell survival by regulating the turn-over of chromatin modulator PRMT4 through ubiquitination and degradation by the proteasomal pathway. Also regulates PPARgamma stability by facilitating PPARgamma/PPARG ubiquitination and thereby plays a role in adipocyte differentiation. In Mus musculus (Mouse), this protein is F-box only protein 9 (Fbxo9).